A 751-amino-acid polypeptide reads, in one-letter code: Photosystem I P700 chlorophyll a apoprotein A1 (751 aa).

8 helical membrane passes run 73–96 (VFSAHFGQLGIIFIWLSGMYFHGA), 159–182 (LYSTAIGGLVMAAAMFFAGWFHFH), 198–222 (LNHHLSGLLGLGSLAWAGHQIHVSL), 294–312 (TAHHHLAIAVLFIVAGHMY), 349–372 (WHAQLAINLALFGSLSIIVAHHQY), 388–414 (LSLFTHHNWIGGFCIVGAAAHAAIFMI), 436–458 (AIISHLNWVCIFLGFHSFGLYIH), and 533–551 (FLVHHVHAFTIHVTVLILL). Cys575 and Cys584 together coordinate [4Fe-4S] cluster. 2 consecutive transmembrane segments (helical) span residues 591 to 612 (HVFLGLFWMYNAISVVIFHFSW) and 665 to 687 (LSAYGLIFLGAHFVWAFSLMFLF). Residue His676 coordinates chlorophyll a'. Chlorophyll a-binding residues include Met684 and Tyr692. Trp693 serves as a coordination point for phylloquinone. The chain crosses the membrane as a helical span at residues 725-745 (AVGVAHYLLGGIATTWSFFLA).

It belongs to the PsaA/PsaB family. As to quaternary structure, the PsaA/B heterodimer binds the P700 chlorophyll special pair and subsequent electron acceptors. PSI consists of a core antenna complex that captures photons, and an electron transfer chain that converts photonic excitation into a charge separation. The eukaryotic PSI reaction center is composed of at least 11 subunits. P700 is a chlorophyll a/chlorophyll a' dimer, A0 is one or more chlorophyll a, A1 is one or both phylloquinones and FX is a shared 4Fe-4S iron-sulfur center. is required as a cofactor.

The protein localises to the plastid. It localises to the chloroplast thylakoid membrane. It catalyses the reaction reduced [plastocyanin] + hnu + oxidized [2Fe-2S]-[ferredoxin] = oxidized [plastocyanin] + reduced [2Fe-2S]-[ferredoxin]. In terms of biological role, psaA and PsaB bind P700, the primary electron donor of photosystem I (PSI), as well as the electron acceptors A0, A1 and FX. PSI is a plastocyanin/cytochrome c6-ferredoxin oxidoreductase, converting photonic excitation into a charge separation, which transfers an electron from the donor P700 chlorophyll pair to the spectroscopically characterized acceptors A0, A1, FX, FA and FB in turn. Oxidized P700 is reduced on the lumenal side of the thylakoid membrane by plastocyanin or cytochrome c6. The polypeptide is Photosystem I P700 chlorophyll a apoprotein A1 (Tupiella akineta (Green alga)).